A 175-amino-acid chain; its full sequence is Co-chaperone protein HscB homolog (175 aa).

The region spanning 8 to 80 (DFFSLFGLPR…LNRARYLLQL (73 aa)) is the J domain.

Belongs to the HscB family. Interacts with HscA and stimulates its ATPase activity.

Functionally, co-chaperone involved in the maturation of iron-sulfur cluster-containing proteins. Seems to help targeting proteins to be folded toward HscA. The polypeptide is Co-chaperone protein HscB homolog (Chromobacterium violaceum (strain ATCC 12472 / DSM 30191 / JCM 1249 / CCUG 213 / NBRC 12614 / NCIMB 9131 / NCTC 9757 / MK)).